Here is a 428-residue protein sequence, read N- to C-terminus: Dihydroorotase (428 aa).

2 residues coordinate Zn(2+): His59 and His61. Substrate is bound by residues 61-63 (HLR) and Asn93. Zn(2+) is bound by residues Asp151, His178, and His231. Asn277 is a binding site for substrate. Residue Asp304 coordinates Zn(2+). Asp304 is an active-site residue. Residues His308 and 322 to 323 (FG) each bind substrate.

This sequence belongs to the metallo-dependent hydrolases superfamily. DHOase family. Class I DHOase subfamily. Requires Zn(2+) as cofactor.

The catalysed reaction is (S)-dihydroorotate + H2O = N-carbamoyl-L-aspartate + H(+). It participates in pyrimidine metabolism; UMP biosynthesis via de novo pathway; (S)-dihydroorotate from bicarbonate: step 3/3. Its function is as follows. Catalyzes the reversible cyclization of carbamoyl aspartate to dihydroorotate. The polypeptide is Dihydroorotase (Bacillus cereus (strain AH187)).